We begin with the raw amino-acid sequence, 132 residues long: UPF0102 protein Ajs_0414 (132 aa).

Positions 1-23 (MGFLGKKVNGSAPARTTRAAGQA) are disordered.

It belongs to the UPF0102 family.

This Acidovorax sp. (strain JS42) protein is UPF0102 protein Ajs_0414.